A 238-amino-acid chain; its full sequence is Phosphoglycolate phosphatase (238 aa).

Aspartate 8 acts as the Nucleophile in catalysis. Mg(2+)-binding residues include aspartate 8 and aspartate 10. A substrate-binding site is contributed by lysine 163. 2 residues coordinate Mg(2+): aspartate 186 and aspartate 190.

It belongs to the archaeal SPP-like hydrolase family. Mg(2+) serves as cofactor.

It catalyses the reaction 2-phosphoglycolate + H2O = glycolate + phosphate. Functionally, catalyzes the dephosphorylation of 2-phosphoglycolate. The protein is Phosphoglycolate phosphatase of Staphylothermus marinus (strain ATCC 43588 / DSM 3639 / JCM 9404 / F1).